Consider the following 130-residue polypeptide: MARDKTRTTKKKERKNIASGVAHVNSTFNNTKILISDVQGNAISWSSAGTMGFKGSRKSTPYAAQLAAEDAGRKAQDHGVKTLEVEVQGPGSGRESALRALAAVGFNITSIRDVTPIAHNGCRPPKRRRV.

The protein belongs to the universal ribosomal protein uS11 family. In terms of assembly, part of the 30S ribosomal subunit. Interacts with proteins S7 and S18. Binds to IF-3.

Located on the platform of the 30S subunit, it bridges several disparate RNA helices of the 16S rRNA. Forms part of the Shine-Dalgarno cleft in the 70S ribosome. The sequence is that of Small ribosomal subunit protein uS11 from Ruegeria pomeroyi (strain ATCC 700808 / DSM 15171 / DSS-3) (Silicibacter pomeroyi).